The primary structure comprises 201 residues: Small ribosomal subunit protein uS4 (201 aa).

A disordered region spans residues 1–45; sequence MARYTGPLTKKSRRLGTDLVGNDKSFERRPYPPGVHGRGRTKDSE. In terms of domain architecture, S4 RNA-binding spans 91–157; it reads SRLDNVVYRA…PPIVIARETF (67 aa).

Belongs to the universal ribosomal protein uS4 family. In terms of assembly, part of the 30S ribosomal subunit. Contacts protein S5. The interaction surface between S4 and S5 is involved in control of translational fidelity.

One of the primary rRNA binding proteins, it binds directly to 16S rRNA where it nucleates assembly of the body of the 30S subunit. In terms of biological role, with S5 and S12 plays an important role in translational accuracy. This chain is Small ribosomal subunit protein uS4, found in Cutibacterium acnes (strain DSM 16379 / KPA171202) (Propionibacterium acnes).